The primary structure comprises 227 residues: Cytochrome c oxidase subunit 2 (227 aa).

The Mitochondrial intermembrane portion of the chain corresponds to 1-14; it reads MAYPMQLGLQDATS. A helical membrane pass occupies residues 15–45; it reads PIMEELLHFHDHTLMIVFLISSLVLYIISLM. Over 46-59 the chain is Mitochondrial matrix; sequence LTTKLTHTSTMDAQ. A helical transmembrane segment spans residues 60 to 87; sequence EVETIWTILPAIILIMIALPSLRILYMM. Residues 88 to 227 are Mitochondrial intermembrane-facing; it reads DEINNPSLTV…HFEKWSASML (140 aa). Cu cation contacts are provided by H161, C196, E198, C200, H204, and M207. A Mg(2+)-binding site is contributed by E198.

The protein belongs to the cytochrome c oxidase subunit 2 family. As to quaternary structure, component of the cytochrome c oxidase (complex IV, CIV), a multisubunit enzyme composed of 14 subunits. The complex is composed of a catalytic core of 3 subunits MT-CO1, MT-CO2 and MT-CO3, encoded in the mitochondrial DNA, and 11 supernumerary subunits COX4I, COX5A, COX5B, COX6A, COX6B, COX6C, COX7A, COX7B, COX7C, COX8 and NDUFA4, which are encoded in the nuclear genome. The complex exists as a monomer or a dimer and forms supercomplexes (SCs) in the inner mitochondrial membrane with NADH-ubiquinone oxidoreductase (complex I, CI) and ubiquinol-cytochrome c oxidoreductase (cytochrome b-c1 complex, complex III, CIII), resulting in different assemblies (supercomplex SCI(1)III(2)IV(1) and megacomplex MCI(2)III(2)IV(2)). Found in a complex with TMEM177, COA6, COX18, COX20, SCO1 and SCO2. Interacts with TMEM177 in a COX20-dependent manner. Interacts with COX20. Interacts with COX16. Cu cation serves as cofactor.

The protein localises to the mitochondrion inner membrane. The catalysed reaction is 4 Fe(II)-[cytochrome c] + O2 + 8 H(+)(in) = 4 Fe(III)-[cytochrome c] + 2 H2O + 4 H(+)(out). Its function is as follows. Component of the cytochrome c oxidase, the last enzyme in the mitochondrial electron transport chain which drives oxidative phosphorylation. The respiratory chain contains 3 multisubunit complexes succinate dehydrogenase (complex II, CII), ubiquinol-cytochrome c oxidoreductase (cytochrome b-c1 complex, complex III, CIII) and cytochrome c oxidase (complex IV, CIV), that cooperate to transfer electrons derived from NADH and succinate to molecular oxygen, creating an electrochemical gradient over the inner membrane that drives transmembrane transport and the ATP synthase. Cytochrome c oxidase is the component of the respiratory chain that catalyzes the reduction of oxygen to water. Electrons originating from reduced cytochrome c in the intermembrane space (IMS) are transferred via the dinuclear copper A center (CU(A)) of subunit 2 and heme A of subunit 1 to the active site in subunit 1, a binuclear center (BNC) formed by heme A3 and copper B (CU(B)). The BNC reduces molecular oxygen to 2 water molecules using 4 electrons from cytochrome c in the IMS and 4 protons from the mitochondrial matrix. In Damaliscus pygargus phillipsi (Blesbok), this protein is Cytochrome c oxidase subunit 2 (MT-CO2).